Reading from the N-terminus, the 438-residue chain is Cytochrome P450 monooxygenase claJ (438 aa).

Cys-378 lines the heme pocket.

Belongs to the cytochrome P450 family. It depends on heme as a cofactor.

Its pathway is secondary metabolite biosynthesis. In terms of biological role, cytochrome P450 monooxygenase; part of the cla gene cluster that produces clavatol and ortho-quinone methide. The clavatol biosynthesis cluster cla and the terrestric acid cluster tra are both involved in the production of peniphenones and penilactones. The non-reducing PKS claF is responsible for the formation of clavatol from successive condensations of 3 malonyl-CoA units, presumably with a simple acetyl-CoA starter unit, and 2 methylation steps. The esterase claE probably collaborates with claF by catalyzing the hydrolysis of ACP-bound acyl intermediates to free the ACP from stalled intermediates. The clavatol oxidase claD then converts clavatol to hydroxyclavatol. Spontaneous dehydration of hydroxyclavatol leads to the accumulation of the highly active ortho-quinone methide. On the other hand, the PKS-NRPS hybrid traA is involved in the formation of crustosic acid, with the help of traB and traD. The polyketide synthase module (PKS) of traA is responsible for the synthesis of the polyketide backbone via the condensation of an acetyl-CoA starter unit with 3 malonyl-CoA units. The downstream nonribosomal peptide synthetase (NRPS) module then amidates the carboxyl end of the polyketide with L-malic acid. Because traA lacks a designated enoylreductase (ER) domain, the required activity is provided the enoyl reductase traG. Crustosic acid undergoes decarboxylation and isomerization to the terrestric acid, catalyzed by the 2-oxoglutarate-dependent dioxygenase traH. Both acids are further converted to the 2 gamma-butyrolactones (R)-5-methyltetronic acid and (S)-5-carboxylmethyltetronic acid, with involvement of the cytochrome P450 monooxygenase claJ. Spontaneous addition of the methide to these gamma-butyrolactones leads to peniphenone D and penilactone D, which undergo again stereospecific attacking by methide to give penilactones A and B. The protein is Cytochrome P450 monooxygenase claJ of Penicillium crustosum (Blue mold fungus).